We begin with the raw amino-acid sequence, 743 residues long: Inhibitor of nuclear factor kappa-B kinase subunit alpha (743 aa).

In terms of domain architecture, Protein kinase spans 15–300 (WDMKDRLGTG…IDCGRPRCFM (286 aa)). Residues 21-29 (LGTGGFGNV) and K44 each bind ATP. The active-site Proton acceptor is D144. The leucine-zipper stretch occupies residues 453-474 (LLRFNTNLTKMKNTMVSASQQL). Residues 736–741 (MDFSWL) are NEMO-binding.

The protein belongs to the protein kinase superfamily. Ser/Thr protein kinase family. I-kappa-B kinase subfamily.

It is found in the cytoplasm. The protein localises to the nucleus. It catalyses the reaction L-seryl-[I-kappa-B protein] + ATP = O-phospho-L-seryl-[I-kappa-B protein] + ADP + H(+). Its activity is regulated as follows. Activated when phosphorylated and inactivated when dephosphorylated. Phosphorylates inhibitors of NF-kappa-B thus leading to the dissociation of the inhibitor/NF-kappa-B complex and ultimately the degradation of the inhibitor. Phosphorylates 'Ser-10' of histone H3 at NF-kappa-B-regulated promoters during inflammatory responses triggered by cytokines. The polypeptide is Inhibitor of nuclear factor kappa-B kinase subunit alpha (chuk) (Xenopus laevis (African clawed frog)).